A 115-amino-acid polypeptide reads, in one-letter code: Immunoglobulin kappa variable 5-2 (115 aa).

An N-terminal signal peptide occupies residues methionine 1 to alanine 20. The segment at glutamate 21–cysteine 43 is framework-1. The 94-residue stretch at threonine 22–proline 115 folds into the Ig-like domain. Asparagine 40 carries N-linked (GlcNAc...) asparagine glycosylation. Phosphoserine is present on serine 42. Cysteine 43 and cysteine 108 are joined by a disulfide. The segment at lysine 44 to asparagine 54 is complementarity-determining-1. Positions tryptophan 55–glutamine 69 are framework-2. A complementarity-determining-2 region spans residues glutamate 70 to proline 76. Residues glycine 77 to cysteine 108 are framework-3. The complementarity-determining-3 stretch occupies residues leucine 109–proline 115.

Immunoglobulins are composed of two identical heavy chains and two identical light chains; disulfide-linked.

It localises to the secreted. It is found in the cell membrane. V region of the variable domain of immunoglobulin light chains that participates in the antigen recognition. Immunoglobulins, also known as antibodies, are membrane-bound or secreted glycoproteins produced by B lymphocytes. In the recognition phase of humoral immunity, the membrane-bound immunoglobulins serve as receptors which, upon binding of a specific antigen, trigger the clonal expansion and differentiation of B lymphocytes into immunoglobulins-secreting plasma cells. Secreted immunoglobulins mediate the effector phase of humoral immunity, which results in the elimination of bound antigens. The antigen binding site is formed by the variable domain of one heavy chain, together with that of its associated light chain. Thus, each immunoglobulin has two antigen binding sites with remarkable affinity for a particular antigen. The variable domains are assembled by a process called V-(D)-J rearrangement and can then be subjected to somatic hypermutations which, after exposure to antigen and selection, allow affinity maturation for a particular antigen. The polypeptide is Immunoglobulin kappa variable 5-2 (Homo sapiens (Human)).